A 473-amino-acid chain; its full sequence is Methionine aminopeptidase 2 (473 aa).

Positions 23-121 (LAEDSSNGTQ…KLVSIDQSYP (99 aa)) are disordered. Residues 41 to 53 (KATTAVGQDNGNN) are compositionally biased toward polar residues. A compositionally biased stretch (acidic residues) spans 73 to 83 (DDDDDDEDDDV). The segment covering 84–93 (AAAAAAVGDA) has biased composition (low complexity). A compositionally biased stretch (basic residues) spans 97 to 113 (KKKKKKKSSNKKKKKKL). H224 is a binding site for substrate. A divalent metal cation is bound by residues D244, D255, and H326. H334 contributes to the substrate binding site. Residues E359 and E454 each coordinate a divalent metal cation.

Belongs to the peptidase M24A family. Methionine aminopeptidase eukaryotic type 2 subfamily. Requires Co(2+) as cofactor. Zn(2+) serves as cofactor. The cofactor is Mn(2+). Fe(2+) is required as a cofactor.

The protein localises to the cytoplasm. The catalysed reaction is Release of N-terminal amino acids, preferentially methionine, from peptides and arylamides.. Its function is as follows. Cotranslationally removes the N-terminal methionine from nascent proteins. The N-terminal methionine is often cleaved when the second residue in the primary sequence is small and uncharged (Met-Ala-, Cys, Gly, Pro, Ser, Thr, or Val). The sequence is that of Methionine aminopeptidase 2 from Lodderomyces elongisporus (strain ATCC 11503 / CBS 2605 / JCM 1781 / NBRC 1676 / NRRL YB-4239) (Yeast).